The sequence spans 97 residues: Secreted Ly-6/uPAR domain-containing protein 2 (97 aa).

Positions 1–22 (MQLGTGLLLAAVLSLQLAAAEA) are cleaved as a signal peptide. Cystine bridges form between C25-C47, C28-C34, C40-C68, C72-C88, and C89-C94. The UPAR/Ly6 domain occupies 25–95 (CHQCTGFGGC…IACCQTSLCN (71 aa)).

As to quaternary structure, interacts with CHRNA3, CHRNA4, CHRNA5, CHRNA7, CHRNB2 and CHRNB4. Interacts with CHRM1 and CHRM3 probably in an allosteric manner. In terms of tissue distribution, expressed at highest levels in cervix and esophagus, followed by adult and fetal skin. Expressed at lower levels in brain, lung, stomach, small intestine, colon, rectum, uterus, and thymus. Not detected in spleen nor bone marrow. Up-regulated 3-fold in psoriatic lesional skin. In the epidermis, predominantly produced by keratinocytes of the suprabasal epidermal compartment (at protein level). In attached gingiva, produced at highest levels by basal cells located in the lowermost epithelial layers (at protein level). Detected in serum (at protein level).

It localises to the secreted. In terms of biological role, binds and may modulate the functional properties of nicotinic and muscarinic acetylcholine receptors. May regulate keratinocytes proliferation, differentiation and apoptosis. In vitro moderately inhibits ACh-evoked currents of alpha-3:beta-2-containing nAChRs and strongly these of alpha-4:beta-2-containing nAChRs, modulates alpha-7-containing nAChRs, and inhibits nicotine-induced signaling probably implicating alpha-3:beta-4-containing nAChRs. Proposed to act on alpha-3:beta-2 and alpha-7 nAChRs in an orthosteric, and on mAChRs, such as CHRM1 and CHRM3, in an allosteric manner. The polypeptide is Secreted Ly-6/uPAR domain-containing protein 2 (Homo sapiens (Human)).